Reading from the N-terminus, the 341-residue chain is S-adenosylmethionine:tRNA ribosyltransferase-isomerase (341 aa).

Belongs to the QueA family. As to quaternary structure, monomer.

It is found in the cytoplasm. It catalyses the reaction 7-aminomethyl-7-carbaguanosine(34) in tRNA + S-adenosyl-L-methionine = epoxyqueuosine(34) in tRNA + adenine + L-methionine + 2 H(+). The protein operates within tRNA modification; tRNA-queuosine biosynthesis. In terms of biological role, transfers and isomerizes the ribose moiety from AdoMet to the 7-aminomethyl group of 7-deazaguanine (preQ1-tRNA) to give epoxyqueuosine (oQ-tRNA). This chain is S-adenosylmethionine:tRNA ribosyltransferase-isomerase, found in Clostridium botulinum (strain ATCC 19397 / Type A).